The primary structure comprises 507 residues: Bifunctional purine biosynthesis protein PurH (507 aa).

The MGS-like domain maps to 1–149; sequence MSESKRIKTA…KNYNDVIIVA (149 aa).

Belongs to the PurH family.

It carries out the reaction (6R)-10-formyltetrahydrofolate + 5-amino-1-(5-phospho-beta-D-ribosyl)imidazole-4-carboxamide = 5-formamido-1-(5-phospho-D-ribosyl)imidazole-4-carboxamide + (6S)-5,6,7,8-tetrahydrofolate. The enzyme catalyses IMP + H2O = 5-formamido-1-(5-phospho-D-ribosyl)imidazole-4-carboxamide. It participates in purine metabolism; IMP biosynthesis via de novo pathway; 5-formamido-1-(5-phospho-D-ribosyl)imidazole-4-carboxamide from 5-amino-1-(5-phospho-D-ribosyl)imidazole-4-carboxamide (10-formyl THF route): step 1/1. It functions in the pathway purine metabolism; IMP biosynthesis via de novo pathway; IMP from 5-formamido-1-(5-phospho-D-ribosyl)imidazole-4-carboxamide: step 1/1. This Bacteroides thetaiotaomicron (strain ATCC 29148 / DSM 2079 / JCM 5827 / CCUG 10774 / NCTC 10582 / VPI-5482 / E50) protein is Bifunctional purine biosynthesis protein PurH.